The primary structure comprises 234 residues: Small ribosomal subunit protein uS3 (234 aa).

The KH type-2 domain maps to 17 to 86; sequence VEKFLTKELK…SPQVEVQQVQ (70 aa).

This sequence belongs to the universal ribosomal protein uS3 family. Part of the 30S ribosomal subunit.

Functionally, binds the lower part of the 30S subunit head. The polypeptide is Small ribosomal subunit protein uS3 (Methanoculleus marisnigri (strain ATCC 35101 / DSM 1498 / JR1)).